The following is a 137-amino-acid chain: Basic phospholipase A2 homolog Ts-R6 (137 aa).

A signal peptide spans 1–16 (MRTLWIMAVLLLGVEG). 7 cysteine pairs are disulfide-bonded: cysteine 42–cysteine 130, cysteine 44–cysteine 60, cysteine 59–cysteine 110, cysteine 65–cysteine 137, cysteine 66–cysteine 103, cysteine 73–cysteine 97, and cysteine 91–cysteine 101.

Expressed by the venom gland.

Its subcellular location is the secreted. Its function is as follows. Snake venom phospholipase A2 homolog that induces local edema a few hours after injection (5-10 ug) in the hind paw and shows weak anticoagulant and myotoxic activities. This is Basic phospholipase A2 homolog Ts-R6 from Trimeresurus stejnegeri (Chinese green tree viper).